The following is a 266-amino-acid chain: Protein PYRICULARIA ORYZAE RESISTANCE 21 (266 aa).

The HMA domain maps to 1 to 68 (MGILVILVDL…IWCKAGKIIK (68 aa)). Cysteine 12 and cysteine 15 together coordinate a metal cation. The tract at residues 129 to 156 (CEKPKPCEKPPPCKPEEPPKPPPEKPPP) is disordered. Basic and acidic residues predominate over residues 142-156 (KPEEPPKPPPEKPPP).

Functionally, involved in defense responses. Contributes to slowing defense responses toward Magnaporthe oryzae. This is Protein PYRICULARIA ORYZAE RESISTANCE 21 from Oryza sativa subsp. japonica (Rice).